A 526-amino-acid chain; its full sequence is Alpha-ketoglutaric semialdehyde dehydrogenase (526 aa).

Residues 159–160 (SN), 185–188 (KAHS), and 240–241 (GS) each bind NADP(+). The Proton acceptor role is filled by Glu264. Cys301 acts as the Nucleophile in catalysis. NADP(+) is bound at residue Glu393.

It belongs to the aldehyde dehydrogenase family.

The catalysed reaction is 2,5-dioxopentanoate + NADP(+) + H2O = 2-oxoglutarate + NADPH + 2 H(+). The protein operates within carbohydrate acid metabolism; D-glucarate degradation. Catalyzes the NAD(P)(+)-dependent oxidation of alpha-ketoglutaric semialdehyde (alphaKGSA) to alpha-ketoglutarate in the D-glutarate degradation pathway. The chain is Alpha-ketoglutaric semialdehyde dehydrogenase from Acinetobacter baylyi (strain ATCC 33305 / BD413 / ADP1).